Here is a 158-residue protein sequence, read N- to C-terminus: MNIIESDTIANKAKIAIAVVRFNRFVNNNLLEGALDVLKRIGHVKDENITIIWVPGSYELPLIAKALAISHKYDGIIALGTVIRGFTIHFEFVAKECSSGLSRISMENTLPIGFGLLTTDNISQAIERSGIKANNKGSEAALAVLEMINILKIIKNSS.

Residues Phe22, 57–59, and 81–83 contribute to the 5-amino-6-(D-ribitylamino)uracil site; these read SYE and TVI. His89 (proton donor) is an active-site residue. Phe114 lines the 5-amino-6-(D-ribitylamino)uracil pocket. Arg128 contributes to the (2S)-2-hydroxy-3-oxobutyl phosphate binding site.

It belongs to the DMRL synthase family. As to quaternary structure, forms an icosahedral capsid composed of 60 subunits, arranged as a dodecamer of pentamers.

The enzyme catalyses (2S)-2-hydroxy-3-oxobutyl phosphate + 5-amino-6-(D-ribitylamino)uracil = 6,7-dimethyl-8-(1-D-ribityl)lumazine + phosphate + 2 H2O + H(+). It participates in cofactor biosynthesis; riboflavin biosynthesis; riboflavin from 2-hydroxy-3-oxobutyl phosphate and 5-amino-6-(D-ribitylamino)uracil: step 1/2. Catalyzes the formation of 6,7-dimethyl-8-ribityllumazine by condensation of 5-amino-6-(D-ribitylamino)uracil with 3,4-dihydroxy-2-butanone 4-phosphate. This is the penultimate step in the biosynthesis of riboflavin. In Blochmanniella pennsylvanica (strain BPEN), this protein is 6,7-dimethyl-8-ribityllumazine synthase.